A 187-amino-acid polypeptide reads, in one-letter code: MTVSASKTAQQLKYIKDSIKTIPDYPKAGILFRDVTSLLENPKAYSASIKLLSEHYSESGVTKVVGTEARGFLFGAPVALALGVGFVPVRKPGKLPRETISESYELEYGTDTLEIHTDSIQPGDKVLVVDDLLATGGTIEATVKLIRRLGGEVVHAAFIINLPELGGEARLTQQGIHCYSLVSFDGH.

The protein belongs to the purine/pyrimidine phosphoribosyltransferase family. As to quaternary structure, homodimer.

The protein resides in the cytoplasm. The enzyme catalyses AMP + diphosphate = 5-phospho-alpha-D-ribose 1-diphosphate + adenine. It participates in purine metabolism; AMP biosynthesis via salvage pathway; AMP from adenine: step 1/1. Its function is as follows. Catalyzes a salvage reaction resulting in the formation of AMP, that is energically less costly than de novo synthesis. In Yersinia pestis (strain Pestoides F), this protein is Adenine phosphoribosyltransferase.